A 231-amino-acid polypeptide reads, in one-letter code: uncharacterized protein (231 aa).

Residues 1 to 10 (MDGKKREVEN) are compositionally biased toward basic and acidic residues. A disordered region spans residues 1–35 (MDGKKREVENGKNGNNIKDGNSSNTTNYGKDTKTT). Residues 11-24 (GKNGNNIKDGNSSN) are compositionally biased toward low complexity. Positions 25-35 (TTNYGKDTKTT) are enriched in polar residues.

This is an uncharacterized protein from Aquifex aeolicus (strain VF5).